A 253-amino-acid polypeptide reads, in one-letter code: Imidazole glycerol phosphate synthase subunit HisF (253 aa).

Catalysis depends on residues aspartate 11 and aspartate 130.

It belongs to the HisA/HisF family. As to quaternary structure, heterodimer of HisH and HisF.

The protein localises to the cytoplasm. It catalyses the reaction 5-[(5-phospho-1-deoxy-D-ribulos-1-ylimino)methylamino]-1-(5-phospho-beta-D-ribosyl)imidazole-4-carboxamide + L-glutamine = D-erythro-1-(imidazol-4-yl)glycerol 3-phosphate + 5-amino-1-(5-phospho-beta-D-ribosyl)imidazole-4-carboxamide + L-glutamate + H(+). It functions in the pathway amino-acid biosynthesis; L-histidine biosynthesis; L-histidine from 5-phospho-alpha-D-ribose 1-diphosphate: step 5/9. Its function is as follows. IGPS catalyzes the conversion of PRFAR and glutamine to IGP, AICAR and glutamate. The HisF subunit catalyzes the cyclization activity that produces IGP and AICAR from PRFAR using the ammonia provided by the HisH subunit. In Dehalococcoides mccartyi (strain ATCC BAA-2100 / JCM 16839 / KCTC 5957 / BAV1), this protein is Imidazole glycerol phosphate synthase subunit HisF.